The following is a 204-amino-acid chain: Large ribosomal subunit protein bL9 (204 aa).

Residues 180–204 (DDIGGAASDDEGDAPAAAADEEESK) are disordered. Acidic residues predominate over residues 187–204 (SDDEGDAPAAAADEEESK).

Belongs to the bacterial ribosomal protein bL9 family.

In terms of biological role, binds to the 23S rRNA. This Ruegeria sp. (strain TM1040) (Silicibacter sp.) protein is Large ribosomal subunit protein bL9.